The following is a 700-amino-acid chain: Hedgehog-interacting protein (700 aa).

Positions 1-17 (MLKMLSFKLLLLAVALG) are cleaved as a signal peptide. An N-linked (GlcNAc...) asparagine glycan is attached at N99. Intrachain disulfides connect C216-C536, C218-C543, C402-C624, C435-C452, C500-C594, C608-C617, C612-C623, C625-C634, C639-C649, C643-C655, and C657-C666. The interval 376–388 (LDDMEEMDGLSDF) is interaction with SHH zinc binding site. D383 contributes to the Zn(2+) binding site. Residues N416, N447, and N459 are each glycosylated (N-linked (GlcNAc...) asparagine). EGF-like domains are found at residues 607–634 (ECSR…GDFC) and 635–667 (RTAK…PQCE).

This sequence belongs to the HHIP family. Interacts with all three hedgehog family members, SHH, IHH and DHH. As to expression, widely expressed in fetal and adult tissues. Highest expression in adult heart, liver and pancreas, and in fetal kidney.

It localises to the cell membrane. The protein localises to the secreted. The protein resides in the cytoplasm. Its function is as follows. Modulates hedgehog signaling in several cell types including brain and lung through direct interaction with members of the hedgehog family. The protein is Hedgehog-interacting protein (HHIP) of Homo sapiens (Human).